The following is a 322-amino-acid chain: Gluconeogenesis factor (322 aa).

It belongs to the gluconeogenesis factor family.

The protein localises to the cytoplasm. In terms of biological role, required for morphogenesis under gluconeogenic growth conditions. The protein is Gluconeogenesis factor of Listeria innocua serovar 6a (strain ATCC BAA-680 / CLIP 11262).